Here is a 197-residue protein sequence, read N- to C-terminus: dITP/XTP pyrophosphatase (197 aa).

8–13 (TGNPGK) provides a ligand contact to substrate. Mg(2+) is bound by residues Glu-40 and Asp-69. Asp-69 functions as the Proton acceptor in the catalytic mechanism. Residues Ser-70, 154–157 (FGYD), Lys-177, and 182–183 (HR) contribute to the substrate site.

This sequence belongs to the HAM1 NTPase family. Homodimer. The cofactor is Mg(2+).

It carries out the reaction XTP + H2O = XMP + diphosphate + H(+). The enzyme catalyses dITP + H2O = dIMP + diphosphate + H(+). It catalyses the reaction ITP + H2O = IMP + diphosphate + H(+). Pyrophosphatase that catalyzes the hydrolysis of nucleoside triphosphates to their monophosphate derivatives, with a high preference for the non-canonical purine nucleotides XTP (xanthosine triphosphate), dITP (deoxyinosine triphosphate) and ITP. Seems to function as a house-cleaning enzyme that removes non-canonical purine nucleotides from the nucleotide pool, thus preventing their incorporation into DNA/RNA and avoiding chromosomal lesions. The chain is dITP/XTP pyrophosphatase from Yersinia pseudotuberculosis serotype I (strain IP32953).